Here is an 834-residue protein sequence, read N- to C-terminus: MAP kinase phosphatase with leucine-rich repeats protein 1 (834 aa).

The disordered stretch occupies residues 1–103 (MIFKKLFSKG…GSGTTKESKK (103 aa)). Residues 36–78 (GSGTNTNGLSNSTTNPSSIHSTPTTPTTTASTNLTNSNKLSTL) show a composition bias toward low complexity. The segment covering 79–98 (APITNGNRSLRGSKDGSGTT) has biased composition (polar residues). 10 LRR repeats span residues 160–181 (ELRS…IGLL), 183–204 (NLKH…LSQL), 206–226 (SLES…NICK), 229–251 (SLTL…INLE), 252–273 (NLKD…LPNN), 274–292 (IEKL…SKSL), 298–319 (SLTT…LSCL), 321–342 (NVKT…VLGS), 345–366 (SLVT…IVTL), and 368–389 (NLRI…PSSE). The tract at residues 503–584 (YEKQENDENN…ENPLKESQGK (82 aa)) is disordered. The segment covering 511 to 536 (NNSVTLETTTTISIASDNTDEASIQI) has biased composition (polar residues). 2 stretches are compositionally biased toward basic and acidic residues: residues 538–554 (QKED…DKLL) and 569–582 (KQQE…KESQ). Residues 555-615 (QESFSENNNN…IRLEKIKYQE (61 aa)) are a coiled coil. Residues 695–834 (VPDLIIDKLY…LKKFEKDLSK (140 aa)) form the Tyrosine-protein phosphatase domain. The active-site Phosphocysteine intermediate is the cysteine 778.

It belongs to the protein-tyrosine phosphatase family. Non-receptor class dual specificity subfamily.

It catalyses the reaction O-phospho-L-tyrosyl-[protein] + H2O = L-tyrosyl-[protein] + phosphate. The enzyme catalyses O-phospho-L-seryl-[protein] + H2O = L-seryl-[protein] + phosphate. It carries out the reaction O-phospho-L-threonyl-[protein] + H2O = L-threonyl-[protein] + phosphate. Its function is as follows. Probable phosphatase with dual specificity toward Ser/Thr and Tyr-containing proteins. Dephosphorylates pNPP, in vitro. Essential for proper regulation of erkB (erk2) and optimal motility during development. This chain is MAP kinase phosphatase with leucine-rich repeats protein 1 (mpl1), found in Dictyostelium discoideum (Social amoeba).